Consider the following 462-residue polypeptide: Probable DNA-directed RNA polymerase subunit 343L (462 aa).

This sequence belongs to the RNA polymerase beta' chain family.

The enzyme catalyses RNA(n) + a ribonucleoside 5'-triphosphate = RNA(n+1) + diphosphate. In terms of biological role, component of the DNA-dependent RNA polymerase that catalyzes the transcription in the cytoplasm of viral DNA into RNA using the four ribonucleoside triphosphates as substrates. The protein is Probable DNA-directed RNA polymerase subunit 343L of Acheta domesticus (House cricket).